Here is a 116-residue protein sequence, read N- to C-terminus: Photosystem II reaction center Psb28 protein (116 aa).

The protein belongs to the Psb28 family. In terms of assembly, part of the photosystem II complex.

The protein localises to the plastid. The protein resides in the chloroplast thylakoid membrane. The sequence is that of Photosystem II reaction center Psb28 protein from Guillardia theta (Cryptophyte).